We begin with the raw amino-acid sequence, 1170 residues long: Putative DNA topoisomerase 2, mitochondrial (1170 aa).

Residues Asn-106, Asn-135, 163–165 (SSN), 176–183 (GRNGYGAK), and 396–398 (QTK) contribute to the ATP site. A Toprim domain is found at 475–590 (CTLILTEGDS…SLVHTDGFIQ (116 aa)). Residues Glu-481, Asp-559, and Asp-561 each coordinate Mg(2+). Residues 722 to 1157 (IPSLIDGLKP…DWKSVWRSEL (436 aa)) form the Topo IIA-type catalytic domain. Tyr-813 serves as the catalytic O-(5'-phospho-DNA)-tyrosine intermediate.

It belongs to the type II topoisomerase family. As to quaternary structure, homodimer. The cofactor is Mg(2+). Mn(2+) is required as a cofactor. Requires Ca(2+) as cofactor.

Its subcellular location is the mitochondrion. It carries out the reaction ATP-dependent breakage, passage and rejoining of double-stranded DNA.. Control of topological states of DNA by transient breakage and subsequent rejoining of DNA strands. Topoisomerase II makes double-strand breaks. The protein is Putative DNA topoisomerase 2, mitochondrial of Caenorhabditis elegans.